Here is a 37-residue protein sequence, read N- to C-terminus: Cytochrome b6-f complex subunit 5 (37 aa).

Residues 5–25 form a helical membrane-spanning segment; that stretch reads LLSGIVLGMITVSALGLFVAA.

The protein belongs to the PetG family. As to quaternary structure, the 4 large subunits of the cytochrome b6-f complex are cytochrome b6, subunit IV (17 kDa polypeptide, PetD), cytochrome f and the Rieske protein, while the 4 small subunits are PetG, PetL, PetM and PetN. The complex functions as a dimer.

It localises to the plastid. The protein localises to the chloroplast thylakoid membrane. Its function is as follows. Component of the cytochrome b6-f complex, which mediates electron transfer between photosystem II (PSII) and photosystem I (PSI), cyclic electron flow around PSI, and state transitions. PetG is required for either the stability or assembly of the cytochrome b6-f complex. The sequence is that of Cytochrome b6-f complex subunit 5 from Trieres chinensis (Marine centric diatom).